The chain runs to 378 residues: Cell surface mannoprotein MP65 (378 aa).

The signal sequence occupies residues 1–32; it reads MLFKSFVTFTVLANALAAPLAHQHHQHKEEKR. The interval 67 to 124 is disordered; that stretch reads VSVSVNTEPPQNHPTTTQDVASASTYPSSTDGSAASSSAAASSSSQAGSEPSGGVGSG. Positions 72 to 93 are enriched in polar residues; it reads NTEPPQNHPTTTQDVASASTYP. Over residues 94-116 the composition is skewed to low complexity; that stretch reads SSTDGSAASSSAAASSSSQAGSE. Residue Glu316 is the Nucleophile of the active site.

Belongs to the glycosyl hydrolase 17 family. In terms of assembly, component of a multiprotein complex of 250 kDa composed of at least HYR1, MP65, and PRA1. Glycosylated protein with a polysaccharide moiety composed exclusively of mannose and glucose at a ratio of 12.7 to 1. Contributes highly to the carbohydrate component of the matrix. Treatment with tunicamycin impairs glycosylation.

The protein localises to the secreted. It is found in the cell wall. Surface mannoprotein required for hyphal morphogenesis, surface adherence, and pathogenicity. Contributes in a high proportion to the carbohydrate component of the matrix due to high levels of glycosylation and may play important roles during biofilm development and maintenance. Acts as a major antigen target of host cell-mediated immune response. Induces extensive T-cell proliferation of human peripheral blood mononuclear cells. Facilitates host dendritic cells maturation and promotes cytokine production through its glycosylated portion while its protein core is essentially involved in induction of T-cell response. The protein is Cell surface mannoprotein MP65 (MP65) of Candida albicans (strain SC5314 / ATCC MYA-2876) (Yeast).